Here is a 216-residue protein sequence, read N- to C-terminus: Pyridoxine/pyridoxamine 5'-phosphate oxidase (216 aa).

Residues 12–15 (RREY) and Lys70 each bind substrate. Residues 65–70 (RLVLLK), 80–81 (YT), Arg86, Lys87, and Gln109 each bind FMN. The substrate site is built by Tyr127, Arg131, and Ser135. Residues 144-145 (QS) and Trp189 contribute to the FMN site. 195–197 (RLH) provides a ligand contact to substrate. Arg199 contacts FMN.

This sequence belongs to the pyridoxamine 5'-phosphate oxidase family. In terms of assembly, homodimer. Requires FMN as cofactor.

It carries out the reaction pyridoxamine 5'-phosphate + O2 + H2O = pyridoxal 5'-phosphate + H2O2 + NH4(+). The enzyme catalyses pyridoxine 5'-phosphate + O2 = pyridoxal 5'-phosphate + H2O2. It participates in cofactor metabolism; pyridoxal 5'-phosphate salvage; pyridoxal 5'-phosphate from pyridoxamine 5'-phosphate: step 1/1. It functions in the pathway cofactor metabolism; pyridoxal 5'-phosphate salvage; pyridoxal 5'-phosphate from pyridoxine 5'-phosphate: step 1/1. In terms of biological role, catalyzes the oxidation of either pyridoxine 5'-phosphate (PNP) or pyridoxamine 5'-phosphate (PMP) into pyridoxal 5'-phosphate (PLP). The chain is Pyridoxine/pyridoxamine 5'-phosphate oxidase from Baumannia cicadellinicola subsp. Homalodisca coagulata.